The chain runs to 317 residues: Ribosomal RNA large subunit methyltransferase F (317 aa).

This sequence belongs to the methyltransferase superfamily. METTL16/RlmF family.

It localises to the cytoplasm. It catalyses the reaction adenosine(1618) in 23S rRNA + S-adenosyl-L-methionine = N(6)-methyladenosine(1618) in 23S rRNA + S-adenosyl-L-homocysteine + H(+). In terms of biological role, specifically methylates the adenine in position 1618 of 23S rRNA. This is Ribosomal RNA large subunit methyltransferase F from Pseudomonas putida (strain ATCC 700007 / DSM 6899 / JCM 31910 / BCRC 17059 / LMG 24140 / F1).